The following is a 432-amino-acid chain: Gamma-glutamyl phosphate reductase (432 aa).

This sequence belongs to the gamma-glutamyl phosphate reductase family.

Its subcellular location is the cytoplasm. The catalysed reaction is L-glutamate 5-semialdehyde + phosphate + NADP(+) = L-glutamyl 5-phosphate + NADPH + H(+). Its pathway is amino-acid biosynthesis; L-proline biosynthesis; L-glutamate 5-semialdehyde from L-glutamate: step 2/2. Catalyzes the NADPH-dependent reduction of L-glutamate 5-phosphate into L-glutamate 5-semialdehyde and phosphate. The product spontaneously undergoes cyclization to form 1-pyrroline-5-carboxylate. In Methylorubrum extorquens (strain PA1) (Methylobacterium extorquens), this protein is Gamma-glutamyl phosphate reductase.